A 159-amino-acid chain; its full sequence is UPF0303 protein Ping_1243 (159 aa).

It belongs to the UPF0303 family.

This Psychromonas ingrahamii (strain DSM 17664 / CCUG 51855 / 37) protein is UPF0303 protein Ping_1243.